We begin with the raw amino-acid sequence, 71 residues long: NAD(P)H-quinone oxidoreductase subunit O (71 aa).

It belongs to the complex I NdhO subunit family. As to quaternary structure, NDH-1 can be composed of about 15 different subunits; different subcomplexes with different compositions have been identified which probably have different functions.

It localises to the cellular thylakoid membrane. It carries out the reaction a plastoquinone + NADH + (n+1) H(+)(in) = a plastoquinol + NAD(+) + n H(+)(out). The enzyme catalyses a plastoquinone + NADPH + (n+1) H(+)(in) = a plastoquinol + NADP(+) + n H(+)(out). In terms of biological role, NDH-1 shuttles electrons from an unknown electron donor, via FMN and iron-sulfur (Fe-S) centers, to quinones in the respiratory and/or the photosynthetic chain. The immediate electron acceptor for the enzyme in this species is believed to be plastoquinone. Couples the redox reaction to proton translocation, and thus conserves the redox energy in a proton gradient. Cyanobacterial NDH-1 also plays a role in inorganic carbon-concentration. This is NAD(P)H-quinone oxidoreductase subunit O from Microcystis aeruginosa (strain NIES-843 / IAM M-2473).